We begin with the raw amino-acid sequence, 244 residues long: Probable 2-phosphosulfolactate phosphatase (244 aa).

The protein belongs to the ComB family. Mg(2+) is required as a cofactor.

It catalyses the reaction (2R)-O-phospho-3-sulfolactate + H2O = (2R)-3-sulfolactate + phosphate. This Thermosynechococcus vestitus (strain NIES-2133 / IAM M-273 / BP-1) protein is Probable 2-phosphosulfolactate phosphatase.